A 227-amino-acid polypeptide reads, in one-letter code: 7-cyano-7-deazaguanine synthase (227 aa).

8–18 (FSGGQDSTTCL) is an ATP binding site. The Zn(2+) site is built by cysteine 187, cysteine 196, cysteine 199, and cysteine 202.

Belongs to the QueC family. Requires Zn(2+) as cofactor.

It catalyses the reaction 7-carboxy-7-deazaguanine + NH4(+) + ATP = 7-cyano-7-deazaguanine + ADP + phosphate + H2O + H(+). The protein operates within purine metabolism; 7-cyano-7-deazaguanine biosynthesis. Functionally, catalyzes the ATP-dependent conversion of 7-carboxy-7-deazaguanine (CDG) to 7-cyano-7-deazaguanine (preQ(0)). In Aliivibrio salmonicida (strain LFI1238) (Vibrio salmonicida (strain LFI1238)), this protein is 7-cyano-7-deazaguanine synthase.